Consider the following 285-residue polypeptide: MTAEHPARLPQAFMTPGSSSFVDFLAAHDPSLLPSSRALPAGSAPPAPHGTTIVAATFDGGVVVAGDRRATSGSMIAHREIEKVFAADEFSAVGIAGTAGLALELVRLFQLELEHYEKIEGTLLSLDGKANRLSTMIRGNLGLAMQGLAVVPLFAGFDLVERRGRIFSYDVTGGRYEELDHHSVGSGSVFARGALKKLWRPGLDAEAAVRVVVEALFDAADDDSATGGPDAVRQIWPVVATVSEAGYLRQGDDALESVVEDISLERTRQARSSRSRHGSLGGDLR.

Positions 1–50 (MTAEHPARLPQAFMTPGSSSFVDFLAAHDPSLLPSSRALPAGSAPPAPHG) are cleaved as a propeptide — removed in mature form; by autocatalysis. The Nucleophile role is filled by Thr-51. The interval 266–285 (RTRQARSSRSRHGSLGGDLR) is disordered.

This sequence belongs to the peptidase T1B family. In terms of assembly, the 20S proteasome core is composed of 14 alpha and 14 beta subunits that assemble into four stacked heptameric rings, resulting in a barrel-shaped structure. The two inner rings, each composed of seven catalytic beta subunits, are sandwiched by two outer rings, each composed of seven alpha subunits. The catalytic chamber with the active sites is on the inside of the barrel. Has a gated structure, the ends of the cylinder being occluded by the N-termini of the alpha-subunits. Is capped by the proteasome-associated ATPase, ARC.

It is found in the cytoplasm. The enzyme catalyses Cleavage of peptide bonds with very broad specificity.. The protein operates within protein degradation; proteasomal Pup-dependent pathway. Its activity is regulated as follows. The formation of the proteasomal ATPase ARC-20S proteasome complex, likely via the docking of the C-termini of ARC into the intersubunit pockets in the alpha-rings, may trigger opening of the gate for substrate entry. Interconversion between the open-gate and close-gate conformations leads to a dynamic regulation of the 20S proteasome proteolysis activity. In terms of biological role, component of the proteasome core, a large protease complex with broad specificity involved in protein degradation. In Sanguibacter keddieii (strain ATCC 51767 / DSM 10542 / NCFB 3025 / ST-74), this protein is Proteasome subunit beta.